The sequence spans 77 residues: Large ribosomal subunit protein bL28 (77 aa).

The tract at residues 1–25 is disordered; the sequence is MARVCQVTGKAPMSGNNVSHANNKT.

The protein belongs to the bacterial ribosomal protein bL28 family.

The polypeptide is Large ribosomal subunit protein bL28 (Paraburkholderia xenovorans (strain LB400)).